Reading from the N-terminus, the 400-residue chain is Argininosuccinate synthase (400 aa).

An ATP-binding site is contributed by 8 to 16 (AYSGGLDTS). Residues Tyr-87 and Ser-92 each contribute to the L-citrulline site. Gly-117 contributes to the ATP binding site. Positions 119, 123, and 124 each coordinate L-aspartate. Asn-123 contacts L-citrulline. L-citrulline-binding residues include Arg-127, Ser-175, Glu-259, and Tyr-271.

It belongs to the argininosuccinate synthase family. Type 1 subfamily. Homotetramer.

The protein localises to the cytoplasm. The enzyme catalyses L-citrulline + L-aspartate + ATP = 2-(N(omega)-L-arginino)succinate + AMP + diphosphate + H(+). Its pathway is amino-acid biosynthesis; L-arginine biosynthesis; L-arginine from L-ornithine and carbamoyl phosphate: step 2/3. This Frankia alni (strain DSM 45986 / CECT 9034 / ACN14a) protein is Argininosuccinate synthase.